The primary structure comprises 90 residues: Small ribosomal subunit protein uS19 (90 aa).

Belongs to the universal ribosomal protein uS19 family.

Its function is as follows. Protein S19 forms a complex with S13 that binds strongly to the 16S ribosomal RNA. In Methylococcus capsulatus (strain ATCC 33009 / NCIMB 11132 / Bath), this protein is Small ribosomal subunit protein uS19.